A 555-amino-acid polypeptide reads, in one-letter code: MRILYLASLLFLITLYLSPTFGWGGGRDCESHRSEYTCKSDRSCAYLPFVSCCGKKEFFCVNRDHRNCCDDLSCAKNTRTGEIFEIWSSCKPHRDFVPYHSPNTTTCESLGCEARGMECEWVESSPCYGTSCCPRIPRCVGHHGGGHKCDRMRCPEGFYCEEQGGSACCVPHHDGCGNIQCPWGHYCVNEHGKCRCVPHRPPPRPPVDQCRNQHCPHGYSCRVIKGCATCVRDARPPHNLCRGFGCPEGSHCEVLEKHPVCVRNHVPPHPPPPPQICGSVNCGPGYICTIINGHPTCIRGDGYLCNQTRCPHDYQCETISTNIVKCSPKNDECKWHRCPPGSSCFNSRNGPHCLANNVFPQLCKVTQCPTDFSCKMIRGNPTCIKARPPVPPPHCSTCAELSSACNHVGMICIQVPSNCTNTRFPCCPSHPICIHPSTTAASTIATTASTVATTTSATTAGTTTGGTTTGGSTSDSSAASSADSSAASSSPSSSAASSAASSEPSSSAASSSAPSSASSSAPSSASSSAPSSSASSSAASSAASSESSESSSATS.

The signal sequence occupies residues 1 to 22; that stretch reads MRILYLASLLFLITLYLSPTFG. Residues 27–144 enclose the DSCP-N domain; it reads RDCESHRSEY…RIPRCVGHHG (118 aa). The N-linked (GlcNAc...) asparagine glycan is linked to N103. 8 consecutive Follistatin-like domains span residues 148–170, 175–197, 209–231, 240–262, 276–298, 304–327, 332–354, and 362–384; these read KCDR…ACCV, GCGN…CRCV, QCRN…ATCV, LCRG…PVCV, ICGS…PTCI, LCNQ…VKCS, ECKW…PHCL, and LCKV…PTCI. N306 carries an N-linked (GlcNAc...) asparagine glycan. N-linked (GlcNAc...) asparagine glycosylation is present at N418. Positions 454–555 are disordered; it reads TTSATTAGTT…ESSESSSATS (102 aa). Positions 470 to 555 are enriched in low complexity; the sequence is GGSTSDSSAA…ESSESSSATS (86 aa).

The protein localises to the spore wall. This Dictyostelium discoideum (Social amoeba) protein is Prespore protein Dp87 (cotD).